Here is a 362-residue protein sequence, read N- to C-terminus: D-alanine--D-alanine ligase (362 aa).

One can recognise an ATP-grasp domain in the interval 134 to 345 (KILAQRAGVP…YPDLITRLIR (212 aa)). Residue 170–225 (GQLGTSNLFVKPSNQGSSVGITHVTDDSNYAEALAEAFKYDDKVLVEEGIVGTEVE) participates in ATP binding. Positions 298, 312, and 314 each coordinate Mg(2+).

The protein belongs to the D-alanine--D-alanine ligase family. Mg(2+) is required as a cofactor. The cofactor is Mn(2+).

It localises to the cytoplasm. It carries out the reaction 2 D-alanine + ATP = D-alanyl-D-alanine + ADP + phosphate + H(+). The protein operates within cell wall biogenesis; peptidoglycan biosynthesis. Cell wall formation. The chain is D-alanine--D-alanine ligase from Lactobacillus delbrueckii subsp. bulgaricus (strain ATCC BAA-365 / Lb-18).